The chain runs to 215 residues: Thymidylate kinase (215 aa).

Residue 12 to 19 participates in ATP binding; sequence GLEGAGKT.

This sequence belongs to the thymidylate kinase family.

The enzyme catalyses dTMP + ATP = dTDP + ADP. Functionally, phosphorylation of dTMP to form dTDP in both de novo and salvage pathways of dTTP synthesis. The chain is Thymidylate kinase from Halorhodospira halophila (strain DSM 244 / SL1) (Ectothiorhodospira halophila (strain DSM 244 / SL1)).